The sequence spans 387 residues: Patatin group D-2 (387 aa).

The N-terminal stretch at 1–23 is a signal peptide; the sequence is MATTKSFLILIVMILATTSSTFA. Residues 32–230 form the PNPLA domain; sequence LSIDGGGIKG…TVADPALLSI (199 aa). The GXGXXG motif lies at 36–41; the sequence is GGGIKG. The short motif at 75–79 is the GXSXG element; sequence GTSTG. Residue Ser-77 is the Nucleophile of the active site. The N-linked (GlcNAc...) asparagine glycan is linked to Asn-115. Asp-216 (proton acceptor) is an active-site residue. The DGA/G motif lies at 216–218; that stretch reads DGA. Residues 361–385 are a coiled coil; the sequence is ETYEEALKRFAKLLSDRKKLRANKA.

The protein belongs to the patatin family. As to expression, tuber.

The protein resides in the vacuole. Functionally, probable lipolytic acyl hydrolase (LAH), an activity which is thought to be involved in the response of tubers to pathogens. This chain is Patatin group D-2, found in Solanum tuberosum (Potato).